We begin with the raw amino-acid sequence, 416 residues long: Gasdermin-B (416 aa).

The interval 1-280 (MFSVFEEITR…EKRKDVLNSL (280 aa)) is triggers pyroptosis. Transmembrane regions (beta stranded) follow at residues 83–101 (EFQI…VRLP) and 102–125 (KEIT…ENRI). Residues K166, K177, K190, and K192 each participate in a (Microbial infection) Glycyl lysine isopeptide (Lys-Gly) (interchain with G-Cter in ubiquitin) cross-link. 2 beta stranded membrane-spanning segments follow: residues 167-183 (EETL…SQIS) and 184-198 (QGHL…REVT). Positions 229–250 (KSFPEEKDGASSCLGKSLGSED) are disordered. A coiled-coil region spans residues 248–276 (SEDSRNMKEKLEDMESVLKDLTEEKRKDV). Residue M308 forms a (Microbial infection) Glycyl lysine isopeptide (Lys-Gly) (interchain with G-Cter in ubiquitin) linkage.

This sequence belongs to the gasdermin family. Homooligomer; homooligomeric ring-shaped pore complex containing 24-26 subunits when inserted in the membrane. In terms of processing, cleavage by granzyme A (GZMA) relieves autoinhibition by releasing the N-terminal moiety (Gasdermin-B, N-terminal) that initiates pyroptosis. Not cleaved by other granzymes. Major cleavage site takes places after Lys-244; a minor cleavage site takes place after Lys-229. Cleavage by neutrophil elastase ELANE, inhibits its ability to trigger pyroptosis. Post-translationally, palmitoylated. (Microbial infection) Ubiquitinated by S.flexneri IpaH7.8, leading to its degradation by the proteasome, thereby preventing its ability to form pores in bacterial-derived membranes. As to expression, in the gastrointestinal tract, expressed in proliferating cells, including in the basal cell layer of esophagus and in isthmus/neck of stomach.

It localises to the cytoplasm. The protein resides in the cell membrane. With respect to regulation, the full-length protein before cleavage is inactive: intramolecular interactions between N- and C-terminal domains mediate autoinhibition in the absence of activation signal. The intrinsic pyroptosis-inducing activity is carried by the released N-terminal moiety (Gasdermin-B, N-terminal) following cleavage by granzyme A (GZMA). Precursor of a pore-forming protein that acts as a downstream mediator of granzyme-mediated cell death. This form constitutes the precursor of the pore-forming protein: upon cleavage, the released N-terminal moiety (Gasdermin-B, N-terminal) binds to membranes and forms pores, triggering pyroptosis. Also acts as a regulator of epithelial cell repair independently of programmed cell death: translocates to the plasma membrane and promotes epithelial maintenance and repair by regulating PTK2/FAK-mediated phosphorylation of PDGFA. In terms of biological role, pore-forming protein produced by cleavage by granzyme A (GZMA), which causes membrane permeabilization and pyroptosis in target cells of cytotoxic T and natural killer (NK) cells. Key downstream mediator of granzyme-mediated cell death: (1) granzyme A (GZMA), delivered to target cells from cytotoxic T- and NK-cells, (2) specifically cleaves Gasdermin-B to generate this form. After cleavage, moves to the plasma membrane, homooligomerizes within the membrane and forms pores of 10-15 nanometers (nm) of inner diameter, triggering pyroptosis. The different isoforms recognize and bind different phospholipids on membranes, promoting cell death of different target cells. Its function is as follows. Precursor of a pore-forming protein that acts as a downstream mediator of granzyme-mediated cell death and mediates pyroptosis. Following cleavage and activation by granzyme A (GZMA), the N-terminal part binds to membrane inner leaflet lipids, homooligomerizes within the human plasma membrane and forms pores of 10-15 nanometers (nm) of inner diameter, triggering pyroptosis. Recognizes and binds membrane inner leaflet lipids of human cells, such as phosphatidylinositol 4-phosphate, phosphatidylinositol 5-phosphate, bisphosphorylated phosphatidylinositols, such as phosphatidylinositol (4,5)-bisphosphate, and more weakly to phosphatidic acid. Also binds sufatide, a component of the apical membrane of epithelial cells. Functionally, precursor of a pore-forming protein that acts as a downstream mediator of granzyme-mediated cell death and mediates pyroptosis of human cells. Following cleavage and activation by granzyme A (GZMA), the N-terminal part binds to membrane inner leaflet lipids, homooligomerizes within the human plasma membrane and forms pores of 10-15 nanometers (nm) of inner diameter, triggering pyroptosis. Precursor of a pore-forming protein that acts as a downstream mediator of granzyme-mediated cell death and specifically mediates cell death of Gram-negative bacteria in response to infection. Following cleavage and activation by granzyme A (GZMA), the N-terminal part recognizes and binds phospholipids found on Gram-negative bacterial membranes, such as lipid A and cariolipin, homooligomerizes within the bacterial membranes and forms pores, triggering pyroptosis followed by cell death. In contrast to isoform 4, does not bind to membrane inner leaflet lipids of host human cell, such as phosphatidylinositol 4-phosphate, phosphatidylinositol 5-phosphate, bisphosphorylated phosphatidylinositols, such as phosphatidylinositol (4,5)-bisphosphate. In terms of biological role, not able to trigger pyroptosis. In Homo sapiens (Human), this protein is Gasdermin-B.